The primary structure comprises 113 residues: uncharacterized protein (113 aa).

This is an uncharacterized protein from Acanthamoeba polyphaga mimivirus (APMV).